We begin with the raw amino-acid sequence, 398 residues long: Argininosuccinate synthase (398 aa).

ATP-binding positions include 9-17 (AYSGGVDTS) and Ala-37. Tyr-88 is an L-citrulline binding site. Gly-118 provides a ligand contact to ATP. Thr-120, Asn-124, and Asp-125 together coordinate L-aspartate. Position 124 (Asn-124) interacts with L-citrulline. L-citrulline-binding residues include Arg-128, Ser-176, Ser-185, Glu-261, and Tyr-273.

The protein belongs to the argininosuccinate synthase family. Type 1 subfamily. As to quaternary structure, homotetramer.

The protein resides in the cytoplasm. It carries out the reaction L-citrulline + L-aspartate + ATP = 2-(N(omega)-L-arginino)succinate + AMP + diphosphate + H(+). Its pathway is amino-acid biosynthesis; L-arginine biosynthesis; L-arginine from L-ornithine and carbamoyl phosphate: step 2/3. The protein is Argininosuccinate synthase of Gloeobacter violaceus (strain ATCC 29082 / PCC 7421).